We begin with the raw amino-acid sequence, 144 residues long: HTH-type transcriptional regulator MntR (144 aa).

Residues 1–63 (MTTPSMEDYI…YEKYRGLILT (63 aa)) form the HTH dtxR-type domain. Positions 8, 11, 77, 99, 102, and 103 each coordinate Mn(2+).

The protein belongs to the DtxR/MntR family. Homodimer.

It localises to the cytoplasm. With respect to regulation, DNA binding is strongly activated by Mn(2+). Functionally, central regulator of manganese homeostasis. In Bacillus pumilus (strain SAFR-032), this protein is HTH-type transcriptional regulator MntR.